The primary structure comprises 268 residues: Undecaprenyl-diphosphatase (268 aa).

7 consecutive transmembrane segments (helical) span residues 5–25 (TIAQALMLGVLEGFTEFIPVS), 43–63 (GKAFEILIQLGAILAVLSVYA), 84–104 (LGILIAFLPAAIIGVVAYQII), 107–127 (VLFETPLLICTMLILGGIVLL), 184–204 (AAEFSFFLAMPTMAGAFAYDL), 214–234 (ADLQIIGVGFIAAFVAAVLVV), and 247–267 (ALFGWWRIFIGVLGLIGVLVL).

The protein belongs to the UppP family.

Its subcellular location is the cell inner membrane. It carries out the reaction di-trans,octa-cis-undecaprenyl diphosphate + H2O = di-trans,octa-cis-undecaprenyl phosphate + phosphate + H(+). Catalyzes the dephosphorylation of undecaprenyl diphosphate (UPP). Confers resistance to bacitracin. The polypeptide is Undecaprenyl-diphosphatase (Chelativorans sp. (strain BNC1)).